We begin with the raw amino-acid sequence, 181 residues long: Peptidyl-tRNA hydrolase (181 aa).

Position 14 (Y14) interacts with tRNA. Catalysis depends on H19, which acts as the Proton acceptor. The tRNA site is built by Y62, N64, and N108.

The protein belongs to the PTH family. Monomer.

The protein resides in the cytoplasm. The catalysed reaction is an N-acyl-L-alpha-aminoacyl-tRNA + H2O = an N-acyl-L-amino acid + a tRNA + H(+). Hydrolyzes ribosome-free peptidyl-tRNAs (with 1 or more amino acids incorporated), which drop off the ribosome during protein synthesis, or as a result of ribosome stalling. Its function is as follows. Catalyzes the release of premature peptidyl moieties from peptidyl-tRNA molecules trapped in stalled 50S ribosomal subunits, and thus maintains levels of free tRNAs and 50S ribosomes. This chain is Peptidyl-tRNA hydrolase, found in Campylobacter jejuni subsp. jejuni serotype O:2 (strain ATCC 700819 / NCTC 11168).